The chain runs to 282 residues: MKIVTTVQEMQQITNELHASGKSIGFVPTMGYLHEGHATLLRKAREENEIVVLSVFVNPLQFGPNEDLDRYPRDIDRDENVAKENGVDYLFYPSVEEMYPSEQTTTVEVVKRTDVLCGKQRPGHFAGVATVLMKLFNITLPTRAYFGMKDAQQVAVIEGFVTDFNIPVTIVPVDIVREEDGLAKSSRNVYLSQDEREEALHLYRSLCIAKERIEAGERNPEIITNLVKEYIETHTKGTVDYADLYAYPSLTMVEKVEGRIILAIAVKFENVRLIDNITLTVK.

30-37 is a binding site for ATP; it reads MGYLHEGH. Histidine 37 serves as the catalytic Proton donor. Glutamine 61 is a (R)-pantoate binding site. Glutamine 61 serves as a coordination point for beta-alanine. 147–150 is an ATP binding site; the sequence is GMKD. Glutamine 153 serves as a coordination point for (R)-pantoate. ATP contacts are provided by residues valine 176 and 184–187; that span reads KSSR.

The protein belongs to the pantothenate synthetase family. As to quaternary structure, homodimer.

It is found in the cytoplasm. The enzyme catalyses (R)-pantoate + beta-alanine + ATP = (R)-pantothenate + AMP + diphosphate + H(+). Its pathway is cofactor biosynthesis; (R)-pantothenate biosynthesis; (R)-pantothenate from (R)-pantoate and beta-alanine: step 1/1. Its function is as follows. Catalyzes the condensation of pantoate with beta-alanine in an ATP-dependent reaction via a pantoyl-adenylate intermediate. The sequence is that of Pantothenate synthetase from Bacillus cereus (strain G9842).